Consider the following 202-residue polypeptide: Orotate phosphoribosyltransferase (202 aa).

5-phospho-alpha-D-ribose 1-diphosphate-binding positions include lysine 93 and 113 to 121 (EDIITTGGS). The orotate site is built by threonine 117 and arginine 145.

The protein belongs to the purine/pyrimidine phosphoribosyltransferase family. PyrE subfamily. As to quaternary structure, homodimer. Requires Mg(2+) as cofactor.

The catalysed reaction is orotidine 5'-phosphate + diphosphate = orotate + 5-phospho-alpha-D-ribose 1-diphosphate. Its pathway is pyrimidine metabolism; UMP biosynthesis via de novo pathway; UMP from orotate: step 1/2. Its function is as follows. Catalyzes the transfer of a ribosyl phosphate group from 5-phosphoribose 1-diphosphate to orotate, leading to the formation of orotidine monophosphate (OMP). In Campylobacter jejuni subsp. jejuni serotype O:2 (strain ATCC 700819 / NCTC 11168), this protein is Orotate phosphoribosyltransferase.